The chain runs to 414 residues: 26S proteasome regulatory subunit 8 homolog (414 aa).

197 to 204 (GPPGTGKT) contributes to the ATP binding site.

Belongs to the AAA ATPase family.

The protein resides in the cytoplasm. It localises to the nucleus. The 26S proteasome is involved in the ATP-dependent degradation of ubiquitinated proteins. The regulatory (or ATPase) complex confers ATP dependency and substrate specificity to the 26S complex. In Naegleria fowleri (Brain eating amoeba), this protein is 26S proteasome regulatory subunit 8 homolog.